Consider the following 569-residue polypeptide: Putative potassium-transporting ATPase ATP-binding subunit (569 aa).

Transmembrane regions (helical) follow at residues 34 to 54 (PVMF…LAMV) and 58 to 78 (IAGS…TVLF). Asp194 serves as the catalytic 4-aspartylphosphate intermediate. Residues Asp231, Glu235, 264–271 (FTAQSRMS), and Lys282 each bind ATP. Asp405 and Asp409 together coordinate Mg(2+). The next 3 helical transmembrane spans lie at 475–495 (FAII…LNVM), 503–523 (AILS…PLAL), and 543–563 (IYGL…DVLL).

Belongs to the cation transport ATPase (P-type) (TC 3.A.3) family. Type IA subfamily. As to quaternary structure, the system is composed of three essential subunits: KdpA, KdpB and KdpC.

The protein localises to the cell inner membrane. It carries out the reaction K(+)(out) + ATP + H2O = K(+)(in) + ADP + phosphate + H(+). In terms of biological role, part of the high-affinity ATP-driven potassium transport (or Kdp) system, which catalyzes the hydrolysis of ATP coupled with the electrogenic transport of potassium into the cytoplasm. This subunit is responsible for energy coupling to the transport system and for the release of the potassium ions to the cytoplasm. This is Putative potassium-transporting ATPase ATP-binding subunit from Salmonella typhi.